The primary structure comprises 159 residues: UPF0303 protein Ping_1243 (159 aa).

It belongs to the UPF0303 family.

This Psychromonas ingrahamii (strain DSM 17664 / CCUG 51855 / 37) protein is UPF0303 protein Ping_1243.